We begin with the raw amino-acid sequence, 363 residues long: Galactokinase (363 aa).

16–19 (EHTD) contributes to the substrate binding site. ATP is bound by residues S50 and 103-109 (GSGLSSS). 2 residues coordinate Mg(2+): S109 and E141. D153 acts as the Proton acceptor in catalysis. Substrate is bound at residue Y205.

The protein belongs to the GHMP kinase family. GalK subfamily.

The protein localises to the cytoplasm. It carries out the reaction alpha-D-galactose + ATP = alpha-D-galactose 1-phosphate + ADP + H(+). The protein operates within carbohydrate metabolism; galactose metabolism. Its function is as follows. Catalyzes the transfer of the gamma-phosphate of ATP to D-galactose to form alpha-D-galactose-1-phosphate (Gal-1-P). The polypeptide is Galactokinase (Mycobacterium tuberculosis (strain ATCC 25177 / H37Ra)).